The following is a 234-amino-acid chain: Exotoxin type G (234 aa).

Residues 1–24 form the signal peptide; sequence MKTNILTIIILSCVFSYGSQLAYA.

It belongs to the staphylococcal/streptococcal toxin family.

Functionally, mitogenic for human peripheral blood lymphocytes. The sequence is that of Exotoxin type G (speG) from Streptococcus pyogenes serotype M3 (strain ATCC BAA-595 / MGAS315).